A 103-amino-acid chain; its full sequence is Large ribosomal subunit protein uL24 (103 aa).

Belongs to the universal ribosomal protein uL24 family. Part of the 50S ribosomal subunit.

Functionally, one of two assembly initiator proteins, it binds directly to the 5'-end of the 23S rRNA, where it nucleates assembly of the 50S subunit. In terms of biological role, one of the proteins that surrounds the polypeptide exit tunnel on the outside of the subunit. In Exiguobacterium sibiricum (strain DSM 17290 / CCUG 55495 / CIP 109462 / JCM 13490 / 255-15), this protein is Large ribosomal subunit protein uL24.